The following is a 762-amino-acid chain: LON peptidase N-terminal domain and RING finger protein 1 (762 aa).

The disordered stretch occupies residues 1-35; it reads MSSPAVARASPGGNREASGGPRSRNGPWEVGGGGE. One copy of the TPR 1 repeat lies at 47–80; the sequence is WELLLRRGELLALGGHLKGALEAFAAALRRGAPA. The RING-type 1 zinc-finger motif lies at 118 to 154; sequence CLSCRGFLSEPVTVPCGHSYCRRCLRRELRARCRLCR. TPR repeat units follow at residues 201–233, 235–267, and 268–301; these read ARAA…EPSD, TLKI…LPNW, and PEVY…DEDF. A Phosphoserine modification is found at serine 420. The segment at 468–506 adopts an RING-type 2 zinc-finger fold; it reads CSLCMRLFFEPVTTPCGHSFCKNCLERCLDHAPYCPLCK. The Lon N-terminal domain maps to 547 to 757; the sequence is TAELSHLTKN…KIQHILTYFS (211 aa).

The protein is LON peptidase N-terminal domain and RING finger protein 1 (Lonrf1) of Mus musculus (Mouse).